A 378-amino-acid chain; its full sequence is Chaperone protein DnaJ (378 aa).

Positions 5–70 (DYYEVLGVAK…QKRAAYDQYG (66 aa)) constitute a J domain. The CR-type zinc finger occupies 138–216 (GYDTQIRVPS…CHGSGKVKET (79 aa)). C151, C154, C168, C171, C190, C193, C204, and C207 together coordinate Zn(2+). CXXCXGXG motif repeat units lie at residues 151–158 (CEVCHGSG), 168–175 (CPTCHGQG), 190–197 (CPKCHGTG), and 204–211 (CAHCHGSG).

This sequence belongs to the DnaJ family. Homodimer. The cofactor is Zn(2+).

It localises to the cytoplasm. Its function is as follows. Participates actively in the response to hyperosmotic and heat shock by preventing the aggregation of stress-denatured proteins and by disaggregating proteins, also in an autonomous, DnaK-independent fashion. Unfolded proteins bind initially to DnaJ; upon interaction with the DnaJ-bound protein, DnaK hydrolyzes its bound ATP, resulting in the formation of a stable complex. GrpE releases ADP from DnaK; ATP binding to DnaK triggers the release of the substrate protein, thus completing the reaction cycle. Several rounds of ATP-dependent interactions between DnaJ, DnaK and GrpE are required for fully efficient folding. Also involved, together with DnaK and GrpE, in the DNA replication of plasmids through activation of initiation proteins. The polypeptide is Chaperone protein DnaJ (Burkholderia vietnamiensis (strain G4 / LMG 22486) (Burkholderia cepacia (strain R1808))).